A 335-amino-acid chain; its full sequence is 4-hydroxy-3-methylbut-2-enyl diphosphate reductase (335 aa).

Cys21 serves as a coordination point for [4Fe-4S] cluster. (2E)-4-hydroxy-3-methylbut-2-enyl diphosphate contacts are provided by His50 and His86. The dimethylallyl diphosphate site is built by His50 and His86. Residues His50 and His86 each contribute to the isopentenyl diphosphate site. Cys108 serves as a coordination point for [4Fe-4S] cluster. His136 is a binding site for (2E)-4-hydroxy-3-methylbut-2-enyl diphosphate. His136 lines the dimethylallyl diphosphate pocket. Position 136 (His136) interacts with isopentenyl diphosphate. Catalysis depends on Glu138, which acts as the Proton donor. Thr177 provides a ligand contact to (2E)-4-hydroxy-3-methylbut-2-enyl diphosphate. Cys207 provides a ligand contact to [4Fe-4S] cluster. The (2E)-4-hydroxy-3-methylbut-2-enyl diphosphate site is built by Ser235, Ser236, Asn237, and Ser280. Positions 235, 236, 237, and 280 each coordinate dimethylallyl diphosphate. Isopentenyl diphosphate contacts are provided by Ser235, Ser236, Asn237, and Ser280.

Belongs to the IspH family. The cofactor is [4Fe-4S] cluster.

The catalysed reaction is isopentenyl diphosphate + 2 oxidized [2Fe-2S]-[ferredoxin] + H2O = (2E)-4-hydroxy-3-methylbut-2-enyl diphosphate + 2 reduced [2Fe-2S]-[ferredoxin] + 2 H(+). It catalyses the reaction dimethylallyl diphosphate + 2 oxidized [2Fe-2S]-[ferredoxin] + H2O = (2E)-4-hydroxy-3-methylbut-2-enyl diphosphate + 2 reduced [2Fe-2S]-[ferredoxin] + 2 H(+). The protein operates within isoprenoid biosynthesis; dimethylallyl diphosphate biosynthesis; dimethylallyl diphosphate from (2E)-4-hydroxy-3-methylbutenyl diphosphate: step 1/1. Its pathway is isoprenoid biosynthesis; isopentenyl diphosphate biosynthesis via DXP pathway; isopentenyl diphosphate from 1-deoxy-D-xylulose 5-phosphate: step 6/6. In terms of biological role, catalyzes the conversion of 1-hydroxy-2-methyl-2-(E)-butenyl 4-diphosphate (HMBPP) into a mixture of isopentenyl diphosphate (IPP) and dimethylallyl diphosphate (DMAPP). Acts in the terminal step of the DOXP/MEP pathway for isoprenoid precursor biosynthesis. The sequence is that of 4-hydroxy-3-methylbut-2-enyl diphosphate reductase from Rhizobium rhizogenes (strain K84 / ATCC BAA-868) (Agrobacterium radiobacter).